A 192-amino-acid polypeptide reads, in one-letter code: Sarcoplasmic calcium-binding protein, beta chain (192 aa).

At Ala1 the chain carries N-acetylalanine. EF-hand domains lie at Trp4–Ile39, Ile56–Gly91, Ala100–Phe135, and Ala136–Phe171. 14 residues coordinate Ca(2+): Asp17, Asp19, Asp21, Asp28, Asp69, Asn71, Asp73, Glu75, Glu80, Asp113, Asp115, Asp117, Met119, and Glu124.

In terms of assembly, SCPs from crayfish, lobster, and shrimp are polymorphic dimers; three isotypes (alpha-alpha, alpha-beta, and beta-beta) have been identified.

Like parvalbumins, SCPs seem to be more abundant in fast contracting muscles, but no functional relationship can be established from this distribution. In Penaeus sp. (Penoeid shrimp), this protein is Sarcoplasmic calcium-binding protein, beta chain.